The following is a 335-amino-acid chain: Holliday junction branch migration complex subunit RuvB (335 aa).

The interval 4 to 184 (ADRIISGQAK…FGIVQRLEFY (181 aa)) is large ATPase domain (RuvB-L). Residues Ile23, Arg24, Gly65, Lys68, Thr69, Thr70, 131–133 (EDY), Arg174, Tyr184, and Arg221 each bind ATP. Residue Thr69 participates in Mg(2+) binding. Residues 185–255 (SVEDLTSIVA…VAKQALSMLD (71 aa)) form a small ATPAse domain (RuvB-S) region. The head domain (RuvB-H) stretch occupies residues 258-335 (DAGFDYLDRK…RHFGLQKLSD (78 aa)). Positions 294, 313, and 318 each coordinate DNA.

The protein belongs to the RuvB family. Homohexamer. Forms an RuvA(8)-RuvB(12)-Holliday junction (HJ) complex. HJ DNA is sandwiched between 2 RuvA tetramers; dsDNA enters through RuvA and exits via RuvB. An RuvB hexamer assembles on each DNA strand where it exits the tetramer. Each RuvB hexamer is contacted by two RuvA subunits (via domain III) on 2 adjacent RuvB subunits; this complex drives branch migration. In the full resolvosome a probable DNA-RuvA(4)-RuvB(12)-RuvC(2) complex forms which resolves the HJ.

The protein resides in the cytoplasm. It carries out the reaction ATP + H2O = ADP + phosphate + H(+). In terms of biological role, the RuvA-RuvB-RuvC complex processes Holliday junction (HJ) DNA during genetic recombination and DNA repair, while the RuvA-RuvB complex plays an important role in the rescue of blocked DNA replication forks via replication fork reversal (RFR). RuvA specifically binds to HJ cruciform DNA, conferring on it an open structure. The RuvB hexamer acts as an ATP-dependent pump, pulling dsDNA into and through the RuvAB complex. RuvB forms 2 homohexamers on either side of HJ DNA bound by 1 or 2 RuvA tetramers; 4 subunits per hexamer contact DNA at a time. Coordinated motions by a converter formed by DNA-disengaged RuvB subunits stimulates ATP hydrolysis and nucleotide exchange. Immobilization of the converter enables RuvB to convert the ATP-contained energy into a lever motion, pulling 2 nucleotides of DNA out of the RuvA tetramer per ATP hydrolyzed, thus driving DNA branch migration. The RuvB motors rotate together with the DNA substrate, which together with the progressing nucleotide cycle form the mechanistic basis for DNA recombination by continuous HJ branch migration. Branch migration allows RuvC to scan DNA until it finds its consensus sequence, where it cleaves and resolves cruciform DNA. The polypeptide is Holliday junction branch migration complex subunit RuvB (Haemophilus influenzae (strain PittEE)).